A 389-amino-acid chain; its full sequence is Aspartic protease 6 (389 aa).

Positions 1-15 (MKTFILLAVLGLASA) are cleaved as a signal peptide. Residues 71 to 384 (YLGNITIGTP…DIGNKRMGFA (314 aa)) enclose the Peptidase A1 domain. A glycan (N-linked (GlcNAc...) asparagine) is linked at asparagine 74. The active site involves aspartate 89. Cysteines 102 and 106 form a disulfide. Residue aspartate 277 is part of the active site. A disulfide bond links cysteine 312 and cysteine 344.

Belongs to the peptidase A1 family. Glycosylated. Has phosphorylcholine-substituted oligosaccharide N-glycans. Expressed in intestine, muscles, pharynx and hypodermis.

Its subcellular location is the secreted. Aspartic protease. The polypeptide is Aspartic protease 6 (Caenorhabditis elegans).